Reading from the N-terminus, the 272-residue chain is ATP synthase subunit a (272 aa).

A run of 5 helical transmembrane segments spans residues 41 to 61 (VLNI…LLIF), 101 to 121 (LIAP…LMDL), 143 to 165 (VPSA…ILYY), 221 to 241 (LIFI…LNVP), and 243 to 263 (AIFH…LTIV).

Belongs to the ATPase A chain family. As to quaternary structure, F-type ATPases have 2 components, CF(1) - the catalytic core - and CF(0) - the membrane proton channel. CF(1) has five subunits: alpha(3), beta(3), gamma(1), delta(1), epsilon(1). CF(0) has three main subunits: a(1), b(2) and c(9-12). The alpha and beta chains form an alternating ring which encloses part of the gamma chain. CF(1) is attached to CF(0) by a central stalk formed by the gamma and epsilon chains, while a peripheral stalk is formed by the delta and b chains.

Its subcellular location is the cell inner membrane. Key component of the proton channel; it plays a direct role in the translocation of protons across the membrane. The polypeptide is ATP synthase subunit a (Sodalis glossinidius (strain morsitans)).